The chain runs to 527 residues: Chorismate synthase (527 aa).

Catalysis depends on residues His-17, His-104, and Asp-485.

The protein belongs to the chorismate synthase family.

It localises to the cytoplasm. Its subcellular location is the cytosol. The enzyme catalyses 5-O-(1-carboxyvinyl)-3-phosphoshikimate = chorismate + phosphate. The catalysed reaction is FMNH2 + NADP(+) = FMN + NADPH + 2 H(+). It functions in the pathway metabolic intermediate biosynthesis; chorismate biosynthesis; chorismate from D-erythrose 4-phosphate and phosphoenolpyruvate: step 7/7. Bifunctional chorismate synthase and flavin reductase. Catalyzes the conversion of 5-enolpyruvylshikimate 3-phosphate (EPSP) to form chorismate. Acts also as a flavin reductase (FR) able to generate reduced flavin mononucleotide in the presence of NADPH. The sequence is that of Chorismate synthase from Plasmodium falciparum (isolate 3D7).